A 453-amino-acid polypeptide reads, in one-letter code: MYKTKCLREKLVLFLKIFFPILIYQFANYSASFVDTAMTGQYNTMDLAGVSMATSIWNPFFTFLTGIVSALVPIIGHHLGRGKKEEVASDFYQFIYLALGLSVVLLGMVLFLAPIILNHIGLEAAVAAVAVRYLWFLSIGIIPLLLFSVIRSLLDSLGLTKLSMYLMLLLLPLNSGFNYLLIYGAFGVPELGGAGAGLGTSLAYWVLLGISVLVLFKQEKLKALHLEKRIPLNMDKIKEGVRLGLPIGGTVFAEVAIFSVVGLIMAKFSPLIIASHQSAMNFSSLMYAFPMSISSAMAIVVSYEVGAKRFDDAKTYIGLGRWTALIFAAFTLTFLYIFRGNVASLYGNDPKFIDLTVRFLTYSLFFQLADTFAAPLQGILRGYKDTVIPFYLGLLGYWGVAIPVRTLFDSLTDFGAYSYWIGLIISLIVSGALYRWRLTVIMKRFESLAKSKC.

The next 12 membrane-spanning stretches (helical) occupy residues 12–34 (VLFL…ASFV), 54–76 (TSIW…PIIG), 96–118 (YLAL…IILN), 128–150 (AVAV…FSVI), 162–184 (LSMY…LIYG), 194–216 (AGAG…LVLF), 243–265 (LGLP…GLIM), 285–307 (LMYA…EVGA), 319–338 (LGRW…LYIF), 358–380 (RFLT…QGIL), 387–404 (VIPF…AIPV), and 414–436 (FGAY…LYRW).

This sequence belongs to the multi antimicrobial extrusion (MATE) (TC 2.A.66.1) family.

It localises to the cell membrane. In terms of biological role, multidrug efflux pump. This is Probable multidrug resistance protein NorM (norM) from Streptococcus pneumoniae serotype 4 (strain ATCC BAA-334 / TIGR4).